The following is a 474-amino-acid chain: Tubulin gamma-2 chain (474 aa).

GTP is bound at residue alanine 142–glycine 148.

This sequence belongs to the tubulin family. Gamma-tubulin complex is composed of gamma-tubulin and GCP proteins.

Its subcellular location is the cytoplasm. It is found in the cytoskeleton. The protein resides in the microtubule organizing center. The protein localises to the nucleus. It localises to the cell cortex. Its function is as follows. Tubulin is the major constituent of microtubules. The gamma chain is found at microtubule organizing centers (MTOC) such as the spindle poles, suggesting that it is involved in the minus-end nucleation of microtubule assembly. In terms of biological role, gamma-tubulin complex is essential for the control of microtubular network remodeling in the course of initiation and development of giant-feeding cells, and for the successful reproduction of nematodes (e.g. Meloidogyne spp.) in their plant hosts. This is Tubulin gamma-2 chain (TUBG2) from Arabidopsis thaliana (Mouse-ear cress).